The following is a 514-amino-acid chain: M-phase inducer phosphatase 1 (514 aa).

Positions 73-83 (MGSSESTDSGF) match the Phosphodegron motif. Position 75 is a phosphoserine; by CHEK1 (serine 75). Phosphoserine; by NEK11 is present on residues serine 78, serine 81, and serine 87. Residue serine 106 is modified to Phosphoserine. Serine 123 is modified (phosphoserine; by CHEK1 and CHEK2). The short motif at 140-142 (KEN) is the KEN box element. At serine 172 the chain carries Phosphoserine; by CHEK1. Positions 256 to 308 (PCGSSTRAVLKRADRSHEEPPRGTKRRKSVPSPVKAKADVPEPAQLPSQSLSL) are disordered. Positions 266-277 (KRADRSHEEPPR) are enriched in basic and acidic residues. Phosphoserine; by CHEK1 and CHEK2 occurs at positions 271 and 284. Serine 311 is modified (phosphoserine). In terms of domain architecture, Rhodanese spans 366-472 (LIKEFVIIDC…FFLKCQSHCE (107 aa)). Cysteine 421 is an active-site residue. Threonine 497 is modified (phosphothreonine; by CHEK1). A phosphoserine; by PLK3 mark is found at serine 503 and serine 509.

Belongs to the MPI phosphatase family. As to quaternary structure, interacts with CCNB1/cyclin B1. Interacts with YWHAE/14-3-3 epsilon when phosphorylated. Interacts with CUL1 specifically when CUL1 is neddylated and active. Interacts with BTRC/BTRCP1 and FBXW11/BTRCP2. Interactions with CUL1, BTRC and FBXW11 are enhanced upon DNA damage. Interacts with CHEK2; mediates CDC25A phosphorylation and degradation in response to infrared-induced DNA damages. Interacts with HSP90AB1; prevents heat shock-mediated CDC25A degradation and contributes to cell cycle progression. In terms of processing, phosphorylated by CHEK1 on Ser-75, Ser-123, Ser-172, Ser-271, Ser-284 and Thr-497 during checkpoint mediated cell cycle arrest. Also phosphorylated by CHEK2 on Ser-123, Ser-271, and Ser-284 during checkpoint mediated cell cycle arrest. Phosphorylation on Ser-172 and Thr-497 creates binding sites for YWHAE/14-3-3 epsilon which inhibits CDC25A. Phosphorylation on Ser-75, Ser-123, Ser-172, Ser-271 and Ser-284 may also promote ubiquitin-dependent proteolysis of CDC25A by the SCF complex. Phosphorylation of CDC25A at Ser-75 by CHEK1 primes it for subsequent phosphorylation at Ser-75, Ser-81 and Ser-87 by NEK11. Phosphorylation by NEK11 is required for BTRC-mediated polyubiquitination and degradation. Phosphorylation by PIM1 leads to an increase in phosphatase activity. Phosphorylated by PLK3 following DNA damage, leading to promote its ubiquitination and degradation. Ubiquitinated by the anaphase promoting complex/cyclosome (APC/C) ubiquitin ligase complex that contains FZR1/CDH1 during G1 phase leading to its degradation by the proteasome. Ubiquitinated by a SCF complex containing BTRC and FBXW11 during S phase leading to its degradation by the proteasome. Deubiquitination by USP17L2/DUB3 leads to its stabilization. Ubiquitously expressed in most developing tissue. High levels in the testis and lower levels in the ovary, particularly in germ cells. Lower levels also in kidney, liver, heart and muscle.

The catalysed reaction is O-phospho-L-tyrosyl-[protein] + H2O = L-tyrosyl-[protein] + phosphate. With respect to regulation, stimulated by B-type cyclins. Stimulated by PIM1-mediated phosphorylation. Its function is as follows. Tyrosine protein phosphatase which functions as a dosage-dependent inducer of mitotic progression. Directly dephosphorylates CDK1 and stimulates its kinase activity. Also dephosphorylates CDK2 in complex with cyclin-E, in vitro. The polypeptide is M-phase inducer phosphatase 1 (Cdc25a) (Mus musculus (Mouse)).